A 234-amino-acid chain; its full sequence is Large ribosomal subunit protein uL1 (234 aa).

The protein belongs to the universal ribosomal protein uL1 family. As to quaternary structure, part of the 50S ribosomal subunit.

In terms of biological role, binds directly to 23S rRNA. The L1 stalk is quite mobile in the ribosome, and is involved in E site tRNA release. Functionally, protein L1 is also a translational repressor protein, it controls the translation of the L11 operon by binding to its mRNA. This is Large ribosomal subunit protein uL1 from Pectobacterium atrosepticum (strain SCRI 1043 / ATCC BAA-672) (Erwinia carotovora subsp. atroseptica).